Consider the following 177-residue polypeptide: Inorganic pyrophosphatase (177 aa).

Residues K30, R44, and Y56 each coordinate substrate. The Mg(2+) site is built by D66, D71, and D103. Residue Y142 coordinates substrate.

This sequence belongs to the PPase family. In terms of assembly, homohexamer. Mg(2+) serves as cofactor.

The protein localises to the cytoplasm. It carries out the reaction diphosphate + H2O = 2 phosphate + H(+). Catalyzes the hydrolysis of inorganic pyrophosphate (PPi) forming two phosphate ions. The protein is Inorganic pyrophosphatase of Agrobacterium fabrum (strain C58 / ATCC 33970) (Agrobacterium tumefaciens (strain C58)).